The sequence spans 369 residues: MSIEKPFFGDDSNRGVSINGGRYVQYNVYGNLFEVSKKYVPPLRPIGRGASGIVCAAWNSETGEEVAIKKIGNAFGNIIDAKRTLREIKLLKHMDHDNVIAIIDIIRPPQPDNFNDVHIVYELMDTDLHHIIRSNQPLTDDHSRFFLYQLLRGLKYVHSANVLHRDLKPSNLLLNANCDLKIGDFGLARTKSETDFMTEYVVTRWYRAPELLLNCSEYTAAIDIWSVGCILGEIMTREPLFPGRDYVQQLRLITELIGSPDDSSLGFLRSDNARRYVRQLPQYPRQNFAARFPNMSVNAVDLLQKMLVFDPNRRITVDEALCHPYLAPLHEYNEEPVCVRPFHFDFEQPSLTEENIKELIYRESVKFNP.

In terms of domain architecture, Protein kinase spans 40–326 (VPPLRPIGRG…VDEALCHPYL (287 aa)). ATP-binding positions include 46–54 (IGRGASGIV) and lysine 69. Aspartate 166 functions as the Proton acceptor in the catalytic mechanism. Threonine 198 is subject to Phosphothreonine. The TXY signature appears at 198–200 (TEY). Position 200 is a phosphotyrosine (tyrosine 200). The residue at position 203 (threonine 203) is a Phosphothreonine.

It belongs to the protein kinase superfamily. CMGC Ser/Thr protein kinase family. MAP kinase subfamily. In terms of assembly, interacts with MKK1, MKK2 and MKK6. Dually phosphorylated on Thr-198 and Tyr-200, which activates the enzyme.

It catalyses the reaction L-seryl-[protein] + ATP = O-phospho-L-seryl-[protein] + ADP + H(+). It carries out the reaction L-threonyl-[protein] + ATP = O-phospho-L-threonyl-[protein] + ADP + H(+). With respect to regulation, activated by threonine and tyrosine phosphorylation. The protein is Mitogen-activated protein kinase 11 (MPK11) of Arabidopsis thaliana (Mouse-ear cress).